Reading from the N-terminus, the 233-residue chain is MRRVLLKISGERLAARGVSVHDAEVIGMLARGIKRVHEMGIQVCLVIGGGNIYRGSSGIPNIDRATGDYMGMLATVINALALQGAINNLGVVSRVQSAIPMRSICEPYVRQKAISHMEKNRIVIFAAGTGNPFFTTDTAAVLRSVEMGCDVMLKGTLVDGIYSDDPRTNINAERITKLSYTDVLSKKLRVLDSSAVSIARDNGMPVVIFSLDSEMAFYEVINKQGNYSTIEGE.

ATP is bound at residue 7-10 (KISG). Position 49 (glycine 49) interacts with UMP. Positions 50 and 54 each coordinate ATP. Residues aspartate 68 and 129–136 (TGNPFFTT) each bind UMP. Residues threonine 156, tyrosine 162, and aspartate 165 each contribute to the ATP site.

Belongs to the UMP kinase family. In terms of assembly, homohexamer.

It localises to the cytoplasm. It carries out the reaction UMP + ATP = UDP + ADP. Its pathway is pyrimidine metabolism; CTP biosynthesis via de novo pathway; UDP from UMP (UMPK route): step 1/1. Inhibited by UTP. Functionally, catalyzes the reversible phosphorylation of UMP to UDP. In Neorickettsia sennetsu (strain ATCC VR-367 / Miyayama) (Ehrlichia sennetsu), this protein is Uridylate kinase.